The primary structure comprises 361 residues: 3-dehydroquinate synthase (361 aa).

NAD(+)-binding positions include 72–77 (SGEKEK), 130–131 (TT), lysine 142, and lysine 151. 3 residues coordinate Zn(2+): glutamate 184, histidine 247, and histidine 264.

The protein belongs to the sugar phosphate cyclases superfamily. Dehydroquinate synthase family. Co(2+) serves as cofactor. It depends on Zn(2+) as a cofactor. NAD(+) is required as a cofactor.

It is found in the cytoplasm. It carries out the reaction 7-phospho-2-dehydro-3-deoxy-D-arabino-heptonate = 3-dehydroquinate + phosphate. It participates in metabolic intermediate biosynthesis; chorismate biosynthesis; chorismate from D-erythrose 4-phosphate and phosphoenolpyruvate: step 2/7. Catalyzes the conversion of 3-deoxy-D-arabino-heptulosonate 7-phosphate (DAHP) to dehydroquinate (DHQ). In Bacillus cereus (strain B4264), this protein is 3-dehydroquinate synthase.